A 179-amino-acid chain; its full sequence is Ubiquitin-conjugating enzyme E2 C (179 aa).

The span at Met1 to Thr14 shows a compositional bias: polar residues. The tract at residues Met1–Val31 is disordered. The residue at position 2 (Ala2) is an N-acetylalanine. Phosphoserine is present on Ser3. Residues Pro30 to Thr175 form the UBC core domain. Cys114 functions as the Glycyl thioester intermediate in the catalytic mechanism.

Belongs to the ubiquitin-conjugating enzyme family. Component of the APC/C complex, composed of at least 14 distinct subunits that assemble into a complex of at least 19 chains with a combined molecular mass of around 1.2 MDa. Within this complex, directly interacts with ANAPC2. Post-translationally, autoubiquitinated by the APC/C complex, leading to its degradation by the proteasome. Its degradation plays a central role in APC/C regulation, allowing cyclin-A accumulation before S phase entry. APC/C substrates inhibit the autoubiquitination of UBE2C/UBCH10 but not its E2 function, hence APC/C remaining active until its substrates have been destroyed.

It carries out the reaction S-ubiquitinyl-[E1 ubiquitin-activating enzyme]-L-cysteine + [E2 ubiquitin-conjugating enzyme]-L-cysteine = [E1 ubiquitin-activating enzyme]-L-cysteine + S-ubiquitinyl-[E2 ubiquitin-conjugating enzyme]-L-cysteine.. It catalyses the reaction S-ubiquitinyl-[E1 ubiquitin-activating enzyme]-L-cysteine + [acceptor protein]-L-lysine = [E1 ubiquitin-activating enzyme]-L-cysteine + N(6)-monoubiquitinyl-[acceptor protein]-L-lysine.. It participates in protein modification; protein ubiquitination. In terms of biological role, accepts ubiquitin from the E1 complex and catalyzes its covalent attachment to other proteins. In vitro catalyzes 'Lys-11'- and 'Lys-48'-linked polyubiquitination. Acts as an essential factor of the anaphase promoting complex/cyclosome (APC/C), a cell cycle-regulated ubiquitin ligase that controls progression through mitosis. Acts by initiating 'Lys-11'-linked polyubiquitin chains on APC/C substrates, leading to the degradation of APC/C substrates by the proteasome and promoting mitotic exit. The chain is Ubiquitin-conjugating enzyme E2 C (UBE2C) from Macaca fascicularis (Crab-eating macaque).